A 174-amino-acid chain; its full sequence is Protein C (174 aa).

This sequence belongs to the morbillivirus protein C family.

In Phocine distemper virus (PDV), this protein is Protein C (P/V/C).